The primary structure comprises 211 residues: N-(5'-phosphoribosyl)anthranilate isomerase (211 aa).

It belongs to the TrpF family.

The enzyme catalyses N-(5-phospho-beta-D-ribosyl)anthranilate = 1-(2-carboxyphenylamino)-1-deoxy-D-ribulose 5-phosphate. It functions in the pathway amino-acid biosynthesis; L-tryptophan biosynthesis; L-tryptophan from chorismate: step 3/5. The sequence is that of N-(5'-phosphoribosyl)anthranilate isomerase from Zymomonas mobilis subsp. pomaceae (strain ATCC 29192 / DSM 22645 / JCM 10191 / CCUG 17912 / NBRC 13757 / NCIMB 11200 / NRRL B-4491 / Barker I).